The chain runs to 210 residues: Large ribosomal subunit protein uL4 (210 aa).

The tract at residues alanine 44–serine 77 is disordered. Residues glycine 60–glycine 71 are compositionally biased toward basic residues.

It belongs to the universal ribosomal protein uL4 family. As to quaternary structure, part of the 50S ribosomal subunit.

Functionally, one of the primary rRNA binding proteins, this protein initially binds near the 5'-end of the 23S rRNA. It is important during the early stages of 50S assembly. It makes multiple contacts with different domains of the 23S rRNA in the assembled 50S subunit and ribosome. Forms part of the polypeptide exit tunnel. This chain is Large ribosomal subunit protein uL4, found in Microcystis aeruginosa (strain NIES-843 / IAM M-2473).